The chain runs to 551 residues: MDRKVAREFRHKVDFLIENDAEKDYLYDVLRMYHQTMDVAVLVGDLKLVINEPSRLPLFDAIRPLIPLKHQVEYDQLTPRRSRKLKEVRLDRLHPEGLGLSVRGGLEFGCGLFISHLIKDGQADSVGLQVGDEIVRINGYSISSCTHEEVINLIRTKKTVSIKVRHIGLIPVKSSPDEPLKWQYVDQFVSESGGGRSSLGSPGSQENKEKKVFISLVGSRGLGCSISSGPIQKPGIFISHVKPGSLSAEVGLETGDQIVEVNGIDFSNLDHKEAVNVLKSSRSLTISIVAGAGRELFMTDQERLAEVRQRELQRQELLMQKRLAMESNKILQEQQEMERQRKKEIAQKAAEENERYRKEMEQIVEEEEKFRKQWEEDWGSKEQLRSPKTITAEVHPIPLRKPKYDLGVDPEFDPADDLDGGTNKRGEQDFRKYEEGFDPYSMFTPEQIMGKDVRLLRVKKEGALDLALEGGVDSPIGKVVVSAVYEGGAAERHGGIVKGDEIMAINGKIVTDYTLAEAEAALQKAWNQGDWIDLVVAVCPPKEYDDELTFF.

The N-terminal domain stretch occupies residues 1 to 86; it reads MDRKVAREFR…LTPRRSRKLK (86 aa). 2 consecutive PDZ domains span residues 87–169 and 211–293; these read EVRL…HIGL and KVFI…AGAG. The interval 194–532 is mediates interaction with MYO7B; the sequence is GGRSSLGSPG…QKAWNQGDWI (339 aa). Ser219 is modified (phosphoserine). A coiled-coil region spans residues 318 to 377; that stretch reads LMQKRLAMESNKILQEQQEMERQRKKEIAQKAAEENERYRKEMEQIVEEEEKFRKQWEED. Residues 401–425 are disordered; that stretch reads KPKYDLGVDPEFDPADDLDGGTNKR. Positions 408 to 419 are enriched in acidic residues; sequence VDPEFDPADDLD. The PDZ 3 domain occupies 452-536; that stretch reads DVRLLRVKKE…NQGDWIDLVV (85 aa).

In terms of assembly, part of the IMAC/intermicrovillar adhesion complex/intermicrovillar tip-link complex composed of ANKS4B, MYO7B, USH1C, CDHR2 and CDHR5. Part of a complex composed of USH1C, USH1G and MYO7A. Interacts with F-actin. Interacts with USH2A. Interacts with SLC4A7. Interacts (via PDZ1 domain) with the C-terminus of USHBP1. Interacts (via N-terminus and PDZ 2 domain) with CDH23. Interacts with USH1G. Interacts with MYO7B. Interacts with CDHR2 and CDHR5; may mediate their interaction with MYO7B at the microvilli tip. Interacts (via PDZ 1 domain) with ANKS4B. Interacts (via PDZ 1 domain) with DOCK4.

Its subcellular location is the cytoplasm. The protein resides in the cytosol. It is found in the cytoskeleton. It localises to the cell projection. The protein localises to the microvillus. Functionally, anchoring/scaffolding protein that is a part of the functional network formed by USH1C, USH1G, CDH23 and MYO7A that mediates mechanotransduction in cochlear hair cells. Required for normal development and maintenance of cochlear hair cell bundles. As part of the intermicrovillar adhesion complex/IMAC plays a role in brush border differentiation, controlling microvilli organization and length. Probably plays a central regulatory role in the assembly of the complex, recruiting CDHR2, CDHR5 and MYO7B to the microvilli tips. This Bos taurus (Bovine) protein is Harmonin (USH1C).